Here is a 395-residue protein sequence, read N- to C-terminus: Probable beta-1,3-galactosyltransferase 8 (395 aa).

Residues 5 to 27 (AASGKAIIVLCLASFLAGSLFMS) form a helical; Signal-anchor for type II membrane protein membrane-spanning segment. N117 carries N-linked (GlcNAc...) asparagine glycosylation.

The protein belongs to the glycosyltransferase 31 family. Mn(2+) is required as a cofactor.

The protein localises to the golgi apparatus membrane. It functions in the pathway protein modification; protein glycosylation. In terms of biological role, beta-1,3-galactosyltransferase that transfers galactose from UDP-galactose to substrates with a terminal glycosyl residue. This chain is Probable beta-1,3-galactosyltransferase 8 (B3GALT8), found in Arabidopsis thaliana (Mouse-ear cress).